The following is a 219-amino-acid chain: uncharacterized protein (219 aa).

The signal sequence occupies residues 1–22 (MKKRRKICYCNTALLLMILLAG). Cysteine 23 carries N-palmitoyl cysteine lipidation. A lipid anchor (S-diacylglycerol cysteine) is attached at cysteine 23. Positions 26-89 (SKDGEAQQPS…SAEEKSKEDN (64 aa)) are disordered. Residues 32-42 (QQPSNQASAVQ) show a composition bias toward polar residues. Basic and acidic residues predominate over residues 43–61 (TDEKHTEPEESTKIRKDEA).

It is found in the cell membrane. This is an uncharacterized protein from Bacillus subtilis (strain 168).